A 468-amino-acid chain; its full sequence is uncharacterized protein (468 aa).

The N-terminal stretch at 1–27 (MRKWYFILLAGVLTSVILAFVYDKTKA) is a signal peptide. PbH1 repeat units follow at residues 125 to 154 (KHDI…YVSG), 156 to 185 (SSHI…AVYG), 189 to 214 (MKDI…VLNG), 216 to 238 (IDGF…DLIG), 249 to 283 (VRNG…YVDG), 284 to 305 (GHDI…EATS), 312 to 334 (ANAI…SIGG), and 397 to 420 (NEGN…WMWK).

The protein localises to the secreted. This is an uncharacterized protein from Bacillus subtilis (strain 168).